A 217-amino-acid polypeptide reads, in one-letter code: Small ribosomal subunit protein uS3 (217 aa).

The 69-residue stretch at 38-106 (IRKFIDNELK…KVHINVIEIK (69 aa)) folds into the KH type-2 domain.

This sequence belongs to the universal ribosomal protein uS3 family. As to quaternary structure, part of the 30S ribosomal subunit. Forms a tight complex with proteins S10 and S14.

Its function is as follows. Binds the lower part of the 30S subunit head. Binds mRNA in the 70S ribosome, positioning it for translation. The chain is Small ribosomal subunit protein uS3 from Staphylococcus aureus (strain MSSA476).